The chain runs to 291 residues: Homoserine kinase (291 aa).

80 to 90 (PLARGLGSSST) serves as a coordination point for ATP.

Belongs to the GHMP kinase family. Homoserine kinase subfamily.

The protein resides in the cytoplasm. It carries out the reaction L-homoserine + ATP = O-phospho-L-homoserine + ADP + H(+). It participates in amino-acid biosynthesis; L-threonine biosynthesis; L-threonine from L-aspartate: step 4/5. In terms of biological role, catalyzes the ATP-dependent phosphorylation of L-homoserine to L-homoserine phosphate. In Lactiplantibacillus plantarum (strain ATCC BAA-793 / NCIMB 8826 / WCFS1) (Lactobacillus plantarum), this protein is Homoserine kinase.